The primary structure comprises 119 residues: uncharacterized protein (119 aa).

Helical transmembrane passes span 52-72 (IVLF…VINI) and 88-108 (VLFS…IFLI).

The protein resides in the membrane. This is an uncharacterized protein from Dictyostelium discoideum (Social amoeba).